The following is a 268-amino-acid chain: MSHAPFIAVIPARLASTRLPNKPLADIDGKPMVVRVAERAHQSSAARVVVATDAASVADACMQHHVEAVLTRADHASGTDRLAEVATVLGLPDDAIVVNVQGDEPLIAPTLIDNVAAHLRDHPDCAIATAAHPIHDPADVFNPNVVKVVLDAADRALLFSRAPLPWARDTWTPAVMAGSVAERPLPAMPVLRHIGIYAYRAGFLRRFPQLAAAPIEQTEQLEQLRAMWHGERIAVLTTDDAPAAGVDTPEDLTRVRAAWAELLAQDGP.

The protein belongs to the KdsB family.

The protein resides in the cytoplasm. The enzyme catalyses 3-deoxy-alpha-D-manno-oct-2-ulosonate + CTP = CMP-3-deoxy-beta-D-manno-octulosonate + diphosphate. The protein operates within nucleotide-sugar biosynthesis; CMP-3-deoxy-D-manno-octulosonate biosynthesis; CMP-3-deoxy-D-manno-octulosonate from 3-deoxy-D-manno-octulosonate and CTP: step 1/1. It functions in the pathway bacterial outer membrane biogenesis; lipopolysaccharide biosynthesis. Functionally, activates KDO (a required 8-carbon sugar) for incorporation into bacterial lipopolysaccharide in Gram-negative bacteria. The chain is 3-deoxy-manno-octulosonate cytidylyltransferase from Ralstonia pickettii (strain 12J).